Reading from the N-terminus, the 444-residue chain is C4-dicarboxylate transport protein (444 aa).

The next 8 membrane-spanning stretches (helical) occupy residues 19–39 (HLYF…HFYP), 55–75 (LVKM…IAGM), 90–110 (IYFL…SNIL), 161–181 (ILQV…VGDL), 199–219 (LVAI…AFTI), 230–250 (LAFL…VVLG), 343–363 (LLLV…AGFI), and 366–386 (AATL…ILGI).

This sequence belongs to the dicarboxylate/amino acid:cation symporter (DAACS) (TC 2.A.23) family.

Its subcellular location is the cell inner membrane. Functionally, responsible for the transport of dicarboxylates such as succinate, fumarate, and malate from the periplasm across the membrane. The polypeptide is C4-dicarboxylate transport protein (Allorhizobium ampelinum (strain ATCC BAA-846 / DSM 112012 / S4) (Agrobacterium vitis (strain S4))).